The following is a 199-amino-acid chain: Elongation factor Ts (199 aa).

The tract at residues 82-85 is involved in Mg(2+) ion dislocation from EF-Tu; sequence TDFV.

This sequence belongs to the EF-Ts family.

The protein localises to the cytoplasm. In terms of biological role, associates with the EF-Tu.GDP complex and induces the exchange of GDP to GTP. It remains bound to the aminoacyl-tRNA.EF-Tu.GTP complex up to the GTP hydrolysis stage on the ribosome. This Leptospira interrogans serogroup Icterohaemorrhagiae serovar Lai (strain 56601) protein is Elongation factor Ts.